The sequence spans 465 residues: CCA-adding enzyme (465 aa).

ATP contacts are provided by Ser63 and Lys66. Ser63 and Lys66 together coordinate CTP. The Mg(2+) site is built by Glu75, Asp77, and Asp127. ATP is bound by residues His149, Lys171, and Tyr180. CTP contacts are provided by His149, Lys171, and Tyr180.

It belongs to the tRNA nucleotidyltransferase/poly(A) polymerase family. Archaeal CCA-adding enzyme subfamily. As to quaternary structure, homodimer. Requires Mg(2+) as cofactor.

The enzyme catalyses a tRNA precursor + 2 CTP + ATP = a tRNA with a 3' CCA end + 3 diphosphate. It carries out the reaction a tRNA with a 3' CCA end + 2 CTP + ATP = a tRNA with a 3' CCACCA end + 3 diphosphate. Functionally, catalyzes the addition and repair of the essential 3'-terminal CCA sequence in tRNAs without using a nucleic acid template. Adds these three nucleotides in the order of C, C, and A to the tRNA nucleotide-73, using CTP and ATP as substrates and producing inorganic pyrophosphate. tRNA 3'-terminal CCA addition is required both for tRNA processing and repair. Also involved in tRNA surveillance by mediating tandem CCA addition to generate a CCACCA at the 3' terminus of unstable tRNAs. While stable tRNAs receive only 3'-terminal CCA, unstable tRNAs are marked with CCACCA and rapidly degraded. The chain is CCA-adding enzyme from Aeropyrum pernix (strain ATCC 700893 / DSM 11879 / JCM 9820 / NBRC 100138 / K1).